A 193-amino-acid chain; its full sequence is Auxin-induced protein 22D (193 aa).

The disordered stretch occupies residues 16-68 (ATELRLGLPGSDEPEKRATARSNKRSSPEASDEESISNGSDVTKEDNVVPPAK). Residues 19-23 (LRLGL) carry the EAR-like (transcriptional repression) motif. Positions 97–184 (GMYVKVSMAG…SCKRLRIMKG (88 aa)) constitute a PB1 domain.

This sequence belongs to the Aux/IAA family. In terms of assembly, homodimers and heterodimers.

It is found in the nucleus. Aux/IAA proteins are short-lived transcriptional factors that function as repressors of early auxin response genes at low auxin concentrations. Repression is thought to result from the interaction with auxin response factors (ARFs), proteins that bind to the auxin-responsive promoter element (AuxRE). Formation of heterodimers with ARF proteins may alter their ability to modulate early auxin response genes expression. The sequence is that of Auxin-induced protein 22D (AUX22D) from Vigna radiata var. radiata (Mung bean).